A 309-amino-acid polypeptide reads, in one-letter code: tRNA-dihydrouridine(16) synthase (309 aa).

Residues 7–9 and glutamine 68 each bind FMN; that span reads PME. Cysteine 98 (proton donor) is an active-site residue. Residues arginine 137, asparagine 198, and 220-221 contribute to the FMN site; that span reads GC.

The protein belongs to the Dus family. DusC subfamily. FMN serves as cofactor.

It catalyses the reaction 5,6-dihydrouridine(16) in tRNA + NADP(+) = uridine(16) in tRNA + NADPH + H(+). It carries out the reaction 5,6-dihydrouridine(16) in tRNA + NAD(+) = uridine(16) in tRNA + NADH + H(+). Functionally, catalyzes the synthesis of 5,6-dihydrouridine (D), a modified base found in the D-loop of most tRNAs, via the reduction of the C5-C6 double bond in target uridines. Specifically modifies U16 in tRNAs. This Azotobacter vinelandii protein is tRNA-dihydrouridine(16) synthase.